A 402-amino-acid polypeptide reads, in one-letter code: Arginine biosynthesis bifunctional protein ArgJ (402 aa).

Substrate-binding residues include Thr-152, Lys-178, Thr-189, Glu-275, Asn-397, and Thr-402. The active-site Nucleophile is the Thr-189.

The protein belongs to the ArgJ family. In terms of assembly, heterotetramer of two alpha and two beta chains.

The protein resides in the cytoplasm. The enzyme catalyses N(2)-acetyl-L-ornithine + L-glutamate = N-acetyl-L-glutamate + L-ornithine. It carries out the reaction L-glutamate + acetyl-CoA = N-acetyl-L-glutamate + CoA + H(+). It participates in amino-acid biosynthesis; L-arginine biosynthesis; L-ornithine and N-acetyl-L-glutamate from L-glutamate and N(2)-acetyl-L-ornithine (cyclic): step 1/1. Its pathway is amino-acid biosynthesis; L-arginine biosynthesis; N(2)-acetyl-L-ornithine from L-glutamate: step 1/4. Functionally, catalyzes two activities which are involved in the cyclic version of arginine biosynthesis: the synthesis of N-acetylglutamate from glutamate and acetyl-CoA as the acetyl donor, and of ornithine by transacetylation between N(2)-acetylornithine and glutamate. This Lactiplantibacillus plantarum (strain ATCC BAA-793 / NCIMB 8826 / WCFS1) (Lactobacillus plantarum) protein is Arginine biosynthesis bifunctional protein ArgJ.